A 468-amino-acid polypeptide reads, in one-letter code: Ribulose bisphosphate carboxylase large chain (468 aa).

Lys5 is modified (N6,N6,N6-trimethyllysine). Substrate-binding residues include Asn114 and Thr164. Lys166 acts as the Proton acceptor in catalysis. Lys168 contributes to the substrate binding site. Residues Lys192, Asp194, and Glu195 each coordinate Mg(2+). Lys192 is subject to N6-carboxylysine. His285 (proton acceptor) is an active-site residue. Residues Arg286, His318, and Ser370 each coordinate substrate.

The protein belongs to the RuBisCO large chain family. Type I subfamily. As to quaternary structure, heterohexadecamer of 8 large chains and 8 small chains; disulfide-linked. The disulfide link is formed within the large subunit homodimers. It depends on Mg(2+) as a cofactor. The disulfide bond which can form in the large chain dimeric partners within the hexadecamer appears to be associated with oxidative stress and protein turnover.

The protein resides in the plastid. It localises to the chloroplast. The enzyme catalyses 2 (2R)-3-phosphoglycerate + 2 H(+) = D-ribulose 1,5-bisphosphate + CO2 + H2O. It catalyses the reaction D-ribulose 1,5-bisphosphate + O2 = 2-phosphoglycolate + (2R)-3-phosphoglycerate + 2 H(+). Its function is as follows. RuBisCO catalyzes two reactions: the carboxylation of D-ribulose 1,5-bisphosphate, the primary event in carbon dioxide fixation, as well as the oxidative fragmentation of the pentose substrate in the photorespiration process. Both reactions occur simultaneously and in competition at the same active site. In Nolana spathulata (Chilean bell flower), this protein is Ribulose bisphosphate carboxylase large chain.